We begin with the raw amino-acid sequence, 168 residues long: Putative gustatory receptor clone PTE03 (168 aa).

Residues 1–25 (TTVPKMLINLQKQNKAISYAGCITQ) lie on the Extracellular side of the membrane. Cys-22 and Cys-104 form a disulfide bridge. The chain crosses the membrane as a helical span at residues 26 to 45 (LSFVLLFAGMENFLLAAMAY). Residues 46 to 67 (DRYVAICKPLRYTAIMKAHLCL) lie on the Cytoplasmic side of the membrane. Residues 68 to 88 (VMTLLSLCISIVDALLHGLMI) traverse the membrane as a helical segment. Over 89 to 121 (LRLSFCTFLEIPHYFCELYQVIKLSCSDTLINN) the chain is Extracellular. A helical membrane pass occupies residues 122 to 143 (ILVYTMTSTLGGVPLGGIIFSY). The Cytoplasmic portion of the chain corresponds to 144 to 165 (FKIISSILRMPSSGSRHRAFST). Residues 166–168 (CGS) form a helical membrane-spanning segment.

Belongs to the G-protein coupled receptor 1 family. In terms of tissue distribution, tongue specific.

The protein resides in the cell membrane. In terms of biological role, possible taste receptor. This chain is Putative gustatory receptor clone PTE03 (Olr1145), found in Rattus norvegicus (Rat).